The chain runs to 602 residues: Leucine-rich repeat-containing protein 40 (602 aa).

The disordered stretch occupies residues 1-26 (MSRHMRAPRFDPRAGFHAEGKDRGPS). Residues 8–24 (PRFDPRAGFHAEGKDRG) are compositionally biased toward basic and acidic residues. Residues 35–58 (ARSSGQLNLAGRNLGEVPQCVWRI) form an LRR 1 repeat. Serine 71 is subject to Phosphoserine. 20 LRR repeats span residues 81-103 (QTDLTKLIISSNKLQSLSDDLRL), 104-126 (LPALTVLDIHDNQLTSLPSAIRE), 127-149 (LDNLQKLNVSHNKLKILPEEITS), 150-172 (LKNLRTLHLQHNELTCIPEGFEH), 174-195 (SCLEDLDLSSNRLATVPADFAL), 196-219 (LSSLLRLNLSSNQLKNLPAEISRM), 221-241 (RLKHLDCDANLLETVPPDVGS), 242-266 (MESLELLYLRRNKLRVLPEFPSCRQ), 268-287 (KELHLAENQIEKLGAEHLQH), 288-310 (LQAILVLDLRGNKLRSVPEEMAL), 311-334 (LQSLERLDLSNNDISSLPCSLGNL), 336-356 (LKFLALEGNPLRTIRREIIAK), 398-421 (IATLKLLDYSDKQATLIPDDLFDA), 424-447 (TTLITSINFSKNQLCEIPQRIVEL), 449-470 (EMVLDINLSFNKLSFISHELCL), 471-494 (LQKLTFLDLRNNFLSSLPEEMSSL), 496-517 (KLQTINLSFNRFKVFPEVLYRI), 519-540 (TLEAVLISNNQVGSVDPQKMKL), 541-564 (MENLNTLDLQNNDLLQIPPELGNC), and 566-587 (QLRTLLLDGNPFRVPRAAILMK).

The chain is Leucine-rich repeat-containing protein 40 (Lrrc40) from Mus musculus (Mouse).